The following is a 191-amino-acid chain: Probable DNA-directed RNA polymerase subunit delta (191 aa).

Residues 14–83 (LSMIEVARAI…GDNKWGLRSW (70 aa)) enclose the HTH HARE-type domain. 2 stretches are compositionally biased toward acidic residues: residues 119-133 (EDAIDYNDDDPEDEN) and 143-191 (YDND…ETND). The segment at 119-191 (EDAIDYNDDD…DDDYEDETND (73 aa)) is disordered.

This sequence belongs to the RpoE family. As to quaternary structure, RNAP is composed of a core of 2 alpha, a beta and a beta' subunits. The core is associated with a delta subunit and one of several sigma factors.

Functionally, participates in both the initiation and recycling phases of transcription. In the presence of the delta subunit, RNAP displays an increased specificity of transcription, a decreased affinity for nucleic acids, and an increased efficiency of RNA synthesis because of enhanced recycling. This chain is Probable DNA-directed RNA polymerase subunit delta, found in Streptococcus thermophilus (strain ATCC BAA-491 / LMD-9).